A 394-amino-acid polypeptide reads, in one-letter code: NAD(P)H-quinone oxidoreductase subunit H (394 aa).

The protein belongs to the complex I 49 kDa subunit family. NDH-1 can be composed of about 15 different subunits; different subcomplexes with different compositions have been identified which probably have different functions.

Its subcellular location is the cellular thylakoid membrane. It catalyses the reaction a plastoquinone + NADH + (n+1) H(+)(in) = a plastoquinol + NAD(+) + n H(+)(out). The catalysed reaction is a plastoquinone + NADPH + (n+1) H(+)(in) = a plastoquinol + NADP(+) + n H(+)(out). NDH-1 shuttles electrons from an unknown electron donor, via FMN and iron-sulfur (Fe-S) centers, to quinones in the respiratory and/or the photosynthetic chain. The immediate electron acceptor for the enzyme in this species is believed to be plastoquinone. Couples the redox reaction to proton translocation, and thus conserves the redox energy in a proton gradient. Cyanobacterial NDH-1 also plays a role in inorganic carbon-concentration. The polypeptide is NAD(P)H-quinone oxidoreductase subunit H (Synechococcus sp. (strain CC9311)).